Consider the following 508-residue polypeptide: ATP synthase subunit alpha, chloroplastic (508 aa).

Residue 172 to 179 coordinates ATP; sequence GDRQTGKT.

Belongs to the ATPase alpha/beta chains family. In terms of assembly, F-type ATPases have 2 components, CF(1) - the catalytic core - and CF(0) - the membrane proton channel. CF(1) has five subunits: alpha(3), beta(3), gamma(1), delta(1), epsilon(1). CF(0) has four main subunits: a, b, b' and c.

It is found in the plastid. Its subcellular location is the chloroplast thylakoid membrane. It carries out the reaction ATP + H2O + 4 H(+)(in) = ADP + phosphate + 5 H(+)(out). Functionally, produces ATP from ADP in the presence of a proton gradient across the membrane. The alpha chain is a regulatory subunit. This is ATP synthase subunit alpha, chloroplastic from Psilotum nudum (Whisk fern).